Consider the following 230-residue polypeptide: MNQVTQFSGNSANLMLYWILKSYYSRFDRIMWIDTLGTFNPAALPLPCLEKTMLVRSFDAQGLKDAVDELESNLKSSEDQAYALCIDSFSNPIGLLMAQGNISFAHAFMMTLGRKCRILTRKFRLAVYLSTSLVYIKQLHLSKPALGNSWPFCLDHSYILEDQQHNKCLVHCNQSRKDLLGCSQLFLLLKGSFTHEYLTIDFYNGTPVSVSSKLHVSPSLYHSSTLNSPS.

Interacts with rlp1 and sws1.

It is found in the cytoplasm. The protein resides in the nucleus. In terms of biological role, involved in homologous recombination where it functions at an early stage of recombination in a pre-recombinogenic complex with rlp1 and sws1. Also has a role at a later stage of recombination in association with the rhp55-rhp57 complex. The polypeptide is DNA repair protein rdl1 (rdl1) (Schizosaccharomyces pombe (strain 972 / ATCC 24843) (Fission yeast)).